We begin with the raw amino-acid sequence, 321 residues long: MAVYTDVSDGALRAFLSLYDIGDLTAYRGIAEGVENSNFVLRTTGGDFILTLYERRVDPADLPWFLGLMGCLSDHGLSCPRPVVARDGQALRTLAGRPAAITTFLPGVWPREVRVAHCAPVGAALAALHMAGQGFGAERANALGPDAWPGLVAACRADGDSVQPGLMAELDAALAEILPAWPARDDLPRGQIHADLFPDNVFFLDGAVSGIIDFYFACTDLLAYDIAICLNAWCFDADGTFDAARGRALIAGYESVRPLTDAERRALPVLAAGAATRFLLTRLYDWVNTPAGAMVTRKDPLDYLKRLRFHRAARNMASYGL.

The protein belongs to the pseudomonas-type ThrB family.

The enzyme catalyses L-homoserine + ATP = O-phospho-L-homoserine + ADP + H(+). Its pathway is amino-acid biosynthesis; L-threonine biosynthesis; L-threonine from L-aspartate: step 4/5. The sequence is that of Homoserine kinase from Gluconacetobacter diazotrophicus (strain ATCC 49037 / DSM 5601 / CCUG 37298 / CIP 103539 / LMG 7603 / PAl5).